The following is a 488-amino-acid chain: L-arabinose isomerase 2 (488 aa).

E306, E331, H348, and H447 together coordinate Mn(2+).

The protein belongs to the arabinose isomerase family. The cofactor is Mn(2+).

It catalyses the reaction beta-L-arabinopyranose = L-ribulose. It participates in carbohydrate degradation; L-arabinose degradation via L-ribulose; D-xylulose 5-phosphate from L-arabinose (bacterial route): step 1/3. In terms of biological role, catalyzes the conversion of L-arabinose to L-ribulose. This Clostridium acetobutylicum (strain ATCC 824 / DSM 792 / JCM 1419 / IAM 19013 / LMG 5710 / NBRC 13948 / NRRL B-527 / VKM B-1787 / 2291 / W) protein is L-arabinose isomerase 2.